Consider the following 466-residue polypeptide: Trigger factor (466 aa).

One can recognise a PPIase FKBP-type domain in the interval 162 to 243; the sequence is GDVVSIDLSA…VRSVKERELP (82 aa). Residues 428-466 are disordered; sequence GNTIDTSEFFGKRVSAGEAEEAEPADEGAARAASDEATT. Residues 457–466 show a composition bias toward low complexity; the sequence is ARAASDEATT.

This sequence belongs to the FKBP-type PPIase family. Tig subfamily.

The protein resides in the cytoplasm. It catalyses the reaction [protein]-peptidylproline (omega=180) = [protein]-peptidylproline (omega=0). Functionally, involved in protein export. Acts as a chaperone by maintaining the newly synthesized protein in an open conformation. Functions as a peptidyl-prolyl cis-trans isomerase. The chain is Trigger factor from Mycobacterium tuberculosis (strain ATCC 25177 / H37Ra).